Consider the following 375-residue polypeptide: Succinyl-diaminopimelate desuccinylase (375 aa).

H66 serves as a coordination point for Zn(2+). D68 is a catalytic residue. D99 contributes to the Zn(2+) binding site. E133 acts as the Proton acceptor in catalysis. Residues E134, E162, and H348 each coordinate Zn(2+).

It belongs to the peptidase M20A family. DapE subfamily. As to quaternary structure, homodimer. It depends on Zn(2+) as a cofactor. Co(2+) serves as cofactor.

It catalyses the reaction N-succinyl-(2S,6S)-2,6-diaminopimelate + H2O = (2S,6S)-2,6-diaminopimelate + succinate. It functions in the pathway amino-acid biosynthesis; L-lysine biosynthesis via DAP pathway; LL-2,6-diaminopimelate from (S)-tetrahydrodipicolinate (succinylase route): step 3/3. Its function is as follows. Catalyzes the hydrolysis of N-succinyl-L,L-diaminopimelic acid (SDAP), forming succinate and LL-2,6-diaminopimelate (DAP), an intermediate involved in the bacterial biosynthesis of lysine and meso-diaminopimelic acid, an essential component of bacterial cell walls. This Shigella sonnei (strain Ss046) protein is Succinyl-diaminopimelate desuccinylase.